The following is a 391-amino-acid chain: GDP-mannose transporter (391 aa).

Basic and acidic residues predominate over residues methionine 1–methionine 11. The tract at residues methionine 1–serine 28 is disordered. Residues methionine 1–asparagine 44 are Cytoplasmic-facing. The helical transmembrane segment at valine 45–valine 65 threads the bilayer. The Lumenal portion of the chain corresponds to threonine 66–asparagine 75. A helical transmembrane segment spans residues tryptophan 76–isoleucine 96. Over cysteine 97 to lysine 115 the chain is Cytoplasmic. A helical membrane pass occupies residues threonine 116 to leucine 138. The Lumenal portion of the chain corresponds to serine 139–proline 141. Residues valine 142–glycine 164 form a helical membrane-spanning segment. The Cytoplasmic portion of the chain corresponds to serine 165 to alanine 170. Residues leucine 171–leucine 193 form a helical membrane-spanning segment. At tyrosine 194 to serine 209 the chain is on the lumenal side. Residues threonine 210–leucine 230 form a helical membrane-spanning segment. The Cytoplasmic segment spans residues serine 231–aspartate 245. The helical transmembrane segment at threonine 246–glutamate 266 threads the bilayer. Residues asparagine 267 and asparagine 272 are each glycosylated (N-linked (GlcNAc...) asparagine). Over asparagine 267–asparagine 284 the chain is Lumenal. The chain crosses the membrane as a helical span at residues leucine 285–tryptophan 305. Residues cysteine 306 to threonine 313 are Cytoplasmic-facing. The helical transmembrane segment at threonine 314 to alanine 336 threads the bilayer. Residues proline 337–threonine 339 are Lumenal-facing. Residues phenylalanine 340–alanine 359 traverse the membrane as a helical segment. Residues lysine 360–alanine 391 are Cytoplasmic-facing. The segment at serine 369–alanine 391 is disordered.

It belongs to the TPT transporter family. SLC35D subfamily. Homooligomer.

It localises to the golgi apparatus membrane. It is found in the cytoplasmic vesicle membrane. The protein resides in the endoplasmic reticulum membrane. Functionally, involved in the import of GDP-mannose from the cytoplasm into the Golgi lumen. The polypeptide is GDP-mannose transporter (vrg4) (Sclerotinia sclerotiorum (strain ATCC 18683 / 1980 / Ss-1) (White mold)).